Here is a 302-residue protein sequence, read N- to C-terminus: Oxygen-dependent coproporphyrinogen-III oxidase (302 aa).

A substrate-binding site is contributed by serine 94. Residues histidine 98 and histidine 108 each contribute to the a divalent metal cation site. Catalysis depends on histidine 108, which acts as the Proton donor. 110–112 (NVR) lines the substrate pocket. A divalent metal cation is bound by residues histidine 147 and histidine 177. The segment at 242–277 (YVEFNLVYDRGTLFGLQTGGRTESILMSMPPLVRWQ) is important for dimerization. 260–262 (GGR) serves as a coordination point for substrate.

This sequence belongs to the aerobic coproporphyrinogen-III oxidase family. As to quaternary structure, homodimer. It depends on a divalent metal cation as a cofactor.

It localises to the cytoplasm. It catalyses the reaction coproporphyrinogen III + O2 + 2 H(+) = protoporphyrinogen IX + 2 CO2 + 2 H2O. It participates in porphyrin-containing compound metabolism; protoporphyrin-IX biosynthesis; protoporphyrinogen-IX from coproporphyrinogen-III (O2 route): step 1/1. Involved in the heme biosynthesis. Catalyzes the aerobic oxidative decarboxylation of propionate groups of rings A and B of coproporphyrinogen-III to yield the vinyl groups in protoporphyrinogen-IX. This Shewanella sp. (strain MR-4) protein is Oxygen-dependent coproporphyrinogen-III oxidase.